The sequence spans 444 residues: Serine/threonine-protein kinase 2 (444 aa).

Residues 87-444 (NRDFYHLSTG…WIDGKSTSHQ (358 aa)) enclose the Protein kinase domain. ATP-binding positions include 93 to 101 (LSTGGYGII) and Lys118. Asp307 (proton acceptor) is an active-site residue.

This sequence belongs to the protein kinase superfamily. Ser/Thr protein kinase family. Poxviruses subfamily. In terms of processing, phosphorylated in vivo. Autophosphorylated in vitro.

The protein localises to the host endoplasmic reticulum. It is found in the host endoplasmic reticulum-Golgi intermediate compartment. It catalyses the reaction L-seryl-[protein] + ATP = O-phospho-L-seryl-[protein] + ADP + H(+). The catalysed reaction is L-threonyl-[protein] + ATP = O-phospho-L-threonyl-[protein] + ADP + H(+). Its function is as follows. Essential serine-protein kinase involved in the early stage of virion morphogenesis. The protein is Serine/threonine-protein kinase 2 (OPG054) of Vertebrata (FPV).